The chain runs to 578 residues: Isocitrate dehydrogenase kinase/phosphatase (578 aa).

ATP contacts are provided by residues 315 to 321 (APGIRGM) and K336. D371 is a catalytic residue.

It belongs to the AceK family.

It is found in the cytoplasm. It carries out the reaction L-seryl-[isocitrate dehydrogenase] + ATP = O-phospho-L-seryl-[isocitrate dehydrogenase] + ADP + H(+). Its function is as follows. Bifunctional enzyme which can phosphorylate or dephosphorylate isocitrate dehydrogenase (IDH) on a specific serine residue. This is a regulatory mechanism which enables bacteria to bypass the Krebs cycle via the glyoxylate shunt in response to the source of carbon. When bacteria are grown on glucose, IDH is fully active and unphosphorylated, but when grown on acetate or ethanol, the activity of IDH declines drastically concomitant with its phosphorylation. This chain is Isocitrate dehydrogenase kinase/phosphatase, found in Shigella boydii serotype 18 (strain CDC 3083-94 / BS512).